The sequence spans 266 residues: 15-hydroxyprostaglandin dehydrogenase [NAD(+)] (266 aa).

NAD(+) is bound by residues 12–20, 36–37, 63–65, and Asn91; these read GAAQGIGRA, DW, and CDV. 2 residues coordinate substrate: Ser138 and Gln148. The active-site Proton acceptor is Tyr151. NAD(+) contacts are provided by residues 151–155 and 186–188; these read YCASK and VDT.

The protein belongs to the short-chain dehydrogenases/reductases (SDR) family. Homodimer.

The protein resides in the cytoplasm. The catalysed reaction is prostaglandin E2 + NAD(+) = 15-oxoprostaglandin E2 + NADH + H(+). It catalyses the reaction (15S)-hydroxy-(5Z,8Z,11Z,13E)-eicosatetraenoate + NAD(+) = 15-oxo-(5Z,8Z,11Z,13E)-eicosatetraenoate + NADH + H(+). The enzyme catalyses (11R)-hydroxy-(5Z,8Z,12E,14Z)-eicosatetraenoate + NAD(+) = 11-oxo-(5Z,8Z,12E,14Z)-eicosatetraenoate + NADH + H(+). It carries out the reaction lipoxin A4 + NAD(+) = 15-oxo-(5S,6R)-dihydroxy-(7E,9E,11Z,13E)-eicosatetraenoate + NADH + H(+). The catalysed reaction is 15-oxo-(5S,6R)-dihydroxy-(7E,9E,11Z)-eicosatrienoate + NADH + H(+) = (5S,6R,15S)-trihydroxy-(7E,9E,11Z)-eicosatrienoate + NAD(+). It catalyses the reaction prostaglandin A1 + NAD(+) = 15-oxo-prostaglandin A1 + NADH + H(+). The enzyme catalyses prostaglandin E1 + NAD(+) = 15-oxoprostaglandin E1 + NADH + H(+). It carries out the reaction 14-hydroxy-(4Z,7Z,10Z,12E,16Z,19Z)-docosahexaenoate + NAD(+) = 14-oxo-(4Z,7Z,10Z,12E,16Z,19Z)-docosahexaenoate + NADH + H(+). The catalysed reaction is resolvin E1 + NAD(+) = 18-oxo-resolvin E1 + NADH + H(+). It catalyses the reaction resolvin D1 + NAD(+) = 8-oxoresolvin D1 + NADH + H(+). The enzyme catalyses resolvin D1 + NAD(+) = 17-oxoresolvin D1 + NADH + H(+). It carries out the reaction resolvin D2 + NAD(+) = 7-oxoresolvin D2 + NADH + H(+). The catalysed reaction is resolvin D2 + NAD(+) = 16-oxoresolvin D2 + NADH + H(+). Functionally, catalyzes the NAD-dependent dehydrogenation (oxidation) of a broad array of hydroxylated polyunsaturated fatty acids (mainly eicosanoids and docosanoids, including prostaglandins, lipoxins and resolvins), yielding their corresponding keto (oxo) metabolites. Decreases the levels of the pro-proliferative prostaglandins such as prostaglandin E2 (whose activity is increased in cancer because of an increase in the expression of cyclooxygenase 2) and generates oxo-fatty acid products that can profoundly influence cell function by abrogating pro-inflammatory cytokine expression. Converts resolvins E1, D1 and D2 to their oxo products, which represents a mode of resolvin inactivation. Resolvin E1 plays important roles during the resolution phase of acute inflammation, while resolvins D1 and D2 have a unique role in obesity-induced adipose inflammation. This is 15-hydroxyprostaglandin dehydrogenase [NAD(+)] (HPGD) from Bos taurus (Bovine).